Here is a 323-residue protein sequence, read N- to C-terminus: Mycothiol acetyltransferase (323 aa).

Glu-44 serves as a coordination point for 1D-myo-inositol 2-(L-cysteinylamino)-2-deoxy-alpha-D-glucopyranoside. N-acetyltransferase domains lie at 77–176 (GQDL…VSLR) and 173–323 (VSLR…VKEG). 98–100 (IAV) contributes to the acetyl-CoA binding site. Residues Glu-200, Lys-240, and Glu-253 each coordinate 1D-myo-inositol 2-(L-cysteinylamino)-2-deoxy-alpha-D-glucopyranoside. Acetyl-CoA-binding positions include 257–259 (VGV) and 264–270 (QGSGLGK). Tyr-291 provides a ligand contact to 1D-myo-inositol 2-(L-cysteinylamino)-2-deoxy-alpha-D-glucopyranoside.

The protein belongs to the acetyltransferase family. MshD subfamily. Monomer.

The catalysed reaction is 1D-myo-inositol 2-(L-cysteinylamino)-2-deoxy-alpha-D-glucopyranoside + acetyl-CoA = mycothiol + CoA + H(+). Its function is as follows. Catalyzes the transfer of acetyl from acetyl-CoA to desacetylmycothiol (Cys-GlcN-Ins) to form mycothiol. The protein is Mycothiol acetyltransferase of Pseudarthrobacter chlorophenolicus (strain ATCC 700700 / DSM 12829 / CIP 107037 / JCM 12360 / KCTC 9906 / NCIMB 13794 / A6) (Arthrobacter chlorophenolicus).